We begin with the raw amino-acid sequence, 254 residues long: Protein GltF (254 aa).

Residues 1 to 25 (MFFKKNLTTAAICAALSVAAFSAMA) form the signal peptide. Residues 213 to 229 (PVAITAVTFPLLIDAAV) traverse the membrane as a helical segment.

To E.coli YhcF.

The protein resides in the cell membrane. Involved in induction of the so-called NTR enzymes in response to nitrogen deprivation, as well as in glutamate biosynthesis. May mediate the glutamate-dependent repression of the GLT operon. The polypeptide is Protein GltF (gltF) (Escherichia coli (strain K12)).